A 102-amino-acid polypeptide reads, in one-letter code: Amoebiasin-1 (102 aa).

The short motif at 27 to 32 (NPTTGY) is the BC loop element. A DE loop motif is present at residues 51 to 61 (DQHAPGICGCG). An FG loop motif is present at residues 85-93 (PWAPNANDR).

The protein belongs to the protease inhibitor I42 family. In terms of assembly, monomer. During oxidative conditions, forms homooligomers; disulfide-linked. Interacts with cysteine protease CP2. Interacts with cysteine protease CP5. Post-translationally, during oxidative conditions, cys-39, cys-58 and cys-60 react to form intra- and inter-molecular disulfide bonds resulting in the loss of the protein inhibitory activity.

The protein resides in the cytoplasm. Cysteine protease inhibitor. Inhibits cysteine proteases CP1, CP2 and CP5. May protect the cytosol against cysteine proteases released by damaged intracellular vesicles. The polypeptide is Amoebiasin-1 (Entamoeba histolytica (strain ATCC 30459 / HM-1:IMSS / ABRM)).